The sequence spans 302 residues: Pyridoxal kinase (302 aa).

Substrate contacts are provided by Ser-10, Thr-45, and Tyr-122. Residues Thr-181–Ser-182 and Val-215–Gly-227 each bind ATP. Asp-228 serves as a coordination point for substrate.

It belongs to the pyridoxine kinase family. Homodimer. The cofactor is a divalent metal cation.

The protein localises to the cytoplasm. The enzyme catalyses pyridoxal + ATP = pyridoxal 5'-phosphate + ADP + H(+). It functions in the pathway cofactor metabolism; pyridoxal 5'-phosphate salvage; pyridoxal 5'-phosphate from pyridoxal: step 1/1. Functionally, required for synthesis of pyridoxal-5-phosphate from vitamin B6. This Dictyostelium discoideum (Social amoeba) protein is Pyridoxal kinase (pykA).